Here is a 314-residue protein sequence, read N- to C-terminus: Leucine-rich repeat-containing protein 52 (314 aa).

The signal sequence occupies residues 1–23; that stretch reads MSLASGPSSKLLLFSLGMGLVSG. The region spanning 24 to 53 is the LRRNT domain; that stretch reads SKCPNKCVCQDQEVACIDLHLTEYPADIPL. The Extracellular portion of the chain corresponds to 24 to 244; the sequence is SKCPNKCVCQ…MCITHLDQQD (221 aa). 2 disulfide bridges follow: cysteine 26-cysteine 32 and cysteine 30-cysteine 39. LRR repeat units lie at residues 54–73, 78–99, 102–123, 126–148, and 151–172; these read NTRR…ALQL, DLVY…TFIG, RLIY…SFSV, NLVR…VFAN, and SLRY…GFHH. Residues asparagine 112, asparagine 131, and asparagine 148 are each glycosylated (N-linked (GlcNAc...) asparagine). An LRRCT domain is found at 184–238; sequence NPWICNCSFLDFTIHLLVSHMDHPDAQNATCTEPAELKGWPITKVGNPLQYMCIT. Disulfide bonds link cysteine 188-cysteine 214 and cysteine 190-cysteine 236. N-linked (GlcNAc...) asparagine glycosylation is found at asparagine 189 and asparagine 211. A helical membrane pass occupies residues 245 to 265; the sequence is YIFLLLIGFCIFAAGTVAAWL. The Cytoplasmic portion of the chain corresponds to 266 to 314; it reads TGVCAVLYQNALRTSSGDDTEDETGSRFANQIFRSNTHLGPIRRFPELI.

In terms of assembly, interacts with KCNMA1. Interacts with KCNU1; this interaction may be required for LRRC52 stability and changes the channel gating properties. In terms of processing, N-glycosylated. In terms of tissue distribution, testis-specific (at protein level). At the mRNA level, also detected in kidney, ventricle, spinal cord and skeletal muscle, although at lower levels compared to testis. Expression in testis at the protein level requires the presence of KCNU1.

Its subcellular location is the cell membrane. In terms of biological role, auxiliary protein of the large-conductance, voltage and calcium-activated potassium channel (BK alpha). Modulates gating properties by producing a marked shift in the BK channel's voltage dependence of activation in the hyperpolarizing direction, and in the absence of calcium. KCNU1 channel auxiliary protein. Modulates KCNU1 gating properties, shifting KCNU1 gating to more negative potentials at a given pH. In Mus musculus (Mouse), this protein is Leucine-rich repeat-containing protein 52 (Lrrc52).